The following is a 468-amino-acid chain: ATP synthase subunit beta (468 aa).

155–162 serves as a coordination point for ATP; that stretch reads GGAGVGKT.

It belongs to the ATPase alpha/beta chains family. F-type ATPases have 2 components, CF(1) - the catalytic core - and CF(0) - the membrane proton channel. CF(1) has five subunits: alpha(3), beta(3), gamma(1), delta(1), epsilon(1). CF(0) has three main subunits: a(1), b(2) and c(9-12). The alpha and beta chains form an alternating ring which encloses part of the gamma chain. CF(1) is attached to CF(0) by a central stalk formed by the gamma and epsilon chains, while a peripheral stalk is formed by the delta and b chains.

Its subcellular location is the cell membrane. It catalyses the reaction ATP + H2O + 4 H(+)(in) = ADP + phosphate + 5 H(+)(out). Its function is as follows. Produces ATP from ADP in the presence of a proton gradient across the membrane. The catalytic sites are hosted primarily by the beta subunits. This is ATP synthase subunit beta from Streptococcus pyogenes serotype M3 (strain ATCC BAA-595 / MGAS315).